Here is a 940-residue protein sequence, read N- to C-terminus: Isoleucine--tRNA ligase (940 aa).

Positions 58 to 68 match the 'HIGH' region motif; the sequence is PYANGSIHIGH. E564 contacts L-isoleucyl-5'-AMP. A 'KMSKS' region motif is present at residues 605-609; that stretch reads KMSKS. ATP is bound at residue K608. Zn(2+) is bound by residues C903, C906, C923, and C926.

It belongs to the class-I aminoacyl-tRNA synthetase family. IleS type 1 subfamily. Monomer. It depends on Zn(2+) as a cofactor.

The protein resides in the cytoplasm. The catalysed reaction is tRNA(Ile) + L-isoleucine + ATP = L-isoleucyl-tRNA(Ile) + AMP + diphosphate. Its function is as follows. Catalyzes the attachment of isoleucine to tRNA(Ile). As IleRS can inadvertently accommodate and process structurally similar amino acids such as valine, to avoid such errors it has two additional distinct tRNA(Ile)-dependent editing activities. One activity is designated as 'pretransfer' editing and involves the hydrolysis of activated Val-AMP. The other activity is designated 'posttransfer' editing and involves deacylation of mischarged Val-tRNA(Ile). In Shewanella sp. (strain ANA-3), this protein is Isoleucine--tRNA ligase.